A 476-amino-acid polypeptide reads, in one-letter code: Cysteine--tRNA ligase (476 aa).

Cys-28 lines the Zn(2+) pocket. A 'HIGH' region motif is present at residues 30-40 (PTVYDNTHLGH). The Zn(2+) site is built by Cys-208, His-233, and Glu-237. The 'KMSKS' region motif lies at 265-269 (KMSKS). Lys-268 is an ATP binding site.

The protein belongs to the class-I aminoacyl-tRNA synthetase family. Zn(2+) is required as a cofactor.

It is found in the cytoplasm. It catalyses the reaction tRNA(Cys) + L-cysteine + ATP = L-cysteinyl-tRNA(Cys) + AMP + diphosphate. The polypeptide is Cysteine--tRNA ligase (Methanococcus maripaludis (strain DSM 14266 / JCM 13030 / NBRC 101832 / S2 / LL)).